The chain runs to 459 residues: Argininosuccinate lyase (459 aa).

It belongs to the lyase 1 family. Argininosuccinate lyase subfamily.

The protein localises to the cytoplasm. It carries out the reaction 2-(N(omega)-L-arginino)succinate = fumarate + L-arginine. It functions in the pathway amino-acid biosynthesis; L-arginine biosynthesis; L-arginine from L-ornithine and carbamoyl phosphate: step 3/3. This is Argininosuccinate lyase from Photorhabdus laumondii subsp. laumondii (strain DSM 15139 / CIP 105565 / TT01) (Photorhabdus luminescens subsp. laumondii).